The sequence spans 571 residues: Kelch-like protein 28 (571 aa).

The region spanning cysteine 35 to glutamine 102 is the BTB domain. 6 Kelch repeats span residues valine 284 to glutamine 331, lysine 332 to glycine 386, glutamate 387 to glycine 433, isoleucine 435 to glycine 479, phenylalanine 480 to asparagine 526, and leucine 528 to alanine 570.

The chain is Kelch-like protein 28 (KLHL28) from Homo sapiens (Human).